A 398-amino-acid polypeptide reads, in one-letter code: MRRNSNFSSLETNYLFSSIRQKIRSFREKHPEISIIDLSIGDTTQPLHASVIDTFSTSVRKLGNPKTYRGYGPELGLPALKEKLSEVCYRGKVSPEEIFISDGAKTDIFRLFSLFGPGKTIAVQDPSYPAYIDAAILAGARKIVKLPCTKETDFFPVIPQEENIDIFCLCSPNNPTGTVLNREQLKELIDYANSHGSIILFDAAYSAFISDPSLPTSIFEIPEARFCAIEINSFSKSLGFAGVRLGWNIVPKDLKYSDGSLIIRDWERFLCTTFNGASLPVQEAAIAGASLFPNLEAISKYRYNSSLLREALQKAEFVVHGGEHAPYLWVEVPSMIPDEDFFDFFLYQYHIAITPGKGFGSCGTGYVRFSSLGKSENIVAACQRLSQTSVYDRTVLSL.

Tyrosine 14 and glycine 41 together coordinate substrate. Pyridoxal 5'-phosphate-binding positions include tyrosine 71, 104-105 (AK), tyrosine 128, asparagine 174, tyrosine 205, and 233-235 (SFS). Residues lysine 105, tyrosine 128, and asparagine 174 each coordinate substrate. The residue at position 236 (lysine 236) is an N6-(pyridoxal phosphate)lysine. Residues arginine 244 and asparagine 275 each contribute to the pyridoxal 5'-phosphate site. The substrate site is built by asparagine 275 and arginine 368.

It belongs to the class-I pyridoxal-phosphate-dependent aminotransferase family. LL-diaminopimelate aminotransferase subfamily. In terms of assembly, homodimer. Pyridoxal 5'-phosphate serves as cofactor.

The catalysed reaction is (2S,6S)-2,6-diaminopimelate + 2-oxoglutarate = (S)-2,3,4,5-tetrahydrodipicolinate + L-glutamate + H2O + H(+). It participates in amino-acid biosynthesis; L-lysine biosynthesis via DAP pathway; LL-2,6-diaminopimelate from (S)-tetrahydrodipicolinate (aminotransferase route): step 1/1. Its function is as follows. Involved in the synthesis of meso-diaminopimelate (m-DAP or DL-DAP), required for both lysine and peptidoglycan biosynthesis. Catalyzes the direct conversion of tetrahydrodipicolinate to LL-diaminopimelate. This is LL-diaminopimelate aminotransferase from Chlamydia felis (strain Fe/C-56) (Chlamydophila felis).